Here is a 141-residue protein sequence, read N- to C-terminus: ATP synthase epsilon chain (141 aa).

It belongs to the ATPase epsilon chain family. As to quaternary structure, F-type ATPases have 2 components, CF(1) - the catalytic core - and CF(0) - the membrane proton channel. CF(1) has five subunits: alpha(3), beta(3), gamma(1), delta(1), epsilon(1). CF(0) has three main subunits: a, b and c.

Its subcellular location is the cell inner membrane. Produces ATP from ADP in the presence of a proton gradient across the membrane. This is ATP synthase epsilon chain from Paraburkholderia phymatum (strain DSM 17167 / CIP 108236 / LMG 21445 / STM815) (Burkholderia phymatum).